Reading from the N-terminus, the 316-residue chain is Beta-ketoacyl-[acyl-carrier-protein] synthase III 4 (316 aa).

Catalysis depends on residues Cys-114 and His-242. The interval Gln-243–Arg-247 is ACP-binding. Residue Asn-272 is part of the active site.

The protein belongs to the thiolase-like superfamily. FabH family. Homodimer.

It is found in the cytoplasm. It catalyses the reaction malonyl-[ACP] + acetyl-CoA + H(+) = 3-oxobutanoyl-[ACP] + CO2 + CoA. The protein operates within lipid metabolism; fatty acid biosynthesis. Functionally, catalyzes the condensation reaction of fatty acid synthesis by the addition to an acyl acceptor of two carbons from malonyl-ACP. Catalyzes the first condensation reaction which initiates fatty acid synthesis and may therefore play a role in governing the total rate of fatty acid production. Possesses both acetoacetyl-ACP synthase and acetyl transacylase activities. Its substrate specificity determines the biosynthesis of branched-chain and/or straight-chain of fatty acids. The sequence is that of Beta-ketoacyl-[acyl-carrier-protein] synthase III 4 from Streptomyces coelicolor (strain ATCC BAA-471 / A3(2) / M145).